We begin with the raw amino-acid sequence, 397 residues long: Digeranylgeranylglycerophospholipid reductase 3 (397 aa).

10 residues coordinate FAD: Ala-16, Asp-35, Cys-46, Ala-47, Gly-49, Arg-102, Ala-126, Asp-283, Gly-295, and Ile-296. Lys-338 contributes to the a 2,3-bis-O-(geranylgeranyl)-sn-glycerol 1-phospholipid binding site.

Belongs to the geranylgeranyl reductase family. DGGGPL reductase subfamily. Requires FAD as cofactor.

It catalyses the reaction a 2,3-bis-O-phytanyl-sn-glycerol 1-phospholipid + 8 A = a 2,3-bis-O-(geranylgeranyl)-sn-glycerol 1-phospholipid + 8 AH2. It carries out the reaction 2,3-bis-O-(phytanyl)-sn-glycerol 1-phosphate + 8 A = 2,3-bis-O-(geranylgeranyl)-sn-glycerol 1-phosphate + 8 AH2. The catalysed reaction is CDP-2,3-bis-O-(geranylgeranyl)-sn-glycerol + 8 AH2 = CDP-2,3-bis-O-(phytanyl)-sn-glycerol + 8 A. The enzyme catalyses archaetidylserine + 8 AH2 = 2,3-bis-O-phytanyl-sn-glycero-3-phospho-L-serine + 8 A. It participates in membrane lipid metabolism; glycerophospholipid metabolism. In terms of biological role, is involved in the reduction of 2,3-digeranylgeranylglycerophospholipids (unsaturated archaeols) into 2,3-diphytanylglycerophospholipids (saturated archaeols) in the biosynthesis of archaeal membrane lipids. Catalyzes the formation of archaetidic acid (2,3-di-O-phytanyl-sn-glyceryl phosphate) from 2,3-di-O-geranylgeranylglyceryl phosphate (DGGGP) via the hydrogenation of each double bond of the isoprenoid chains. Is also probably able to reduce double bonds of geranyl groups in CDP-2,3-bis-O-(geranylgeranyl)-sn-glycerol and archaetidylserine, thus acting at various stages in the biosynthesis of archaeal membrane lipids. The chain is Digeranylgeranylglycerophospholipid reductase 3 from Methanosphaera stadtmanae (strain ATCC 43021 / DSM 3091 / JCM 11832 / MCB-3).